We begin with the raw amino-acid sequence, 151 residues long: Ribosomal RNA large subunit methyltransferase H (151 aa).

S-adenosyl-L-methionine-binding positions include Leu73, Gly100, and 119-124; that span reads LSKMTM.

Belongs to the RNA methyltransferase RlmH family. As to quaternary structure, homodimer.

It localises to the cytoplasm. It catalyses the reaction pseudouridine(1915) in 23S rRNA + S-adenosyl-L-methionine = N(3)-methylpseudouridine(1915) in 23S rRNA + S-adenosyl-L-homocysteine + H(+). In terms of biological role, specifically methylates the pseudouridine at position 1915 (m3Psi1915) in 23S rRNA. This chain is Ribosomal RNA large subunit methyltransferase H, found in Campylobacter concisus (strain 13826).